Reading from the N-terminus, the 293-residue chain is Probable chromosome 2-partitioning protein ParB (293 aa).

This sequence belongs to the ParB family.

Involved in chromosome partition. Localize to both poles of the predivisional cell following completion of DNA replication. Binds to the DNA origin of replication. The polypeptide is Probable chromosome 2-partitioning protein ParB (parB2) (Deinococcus radiodurans (strain ATCC 13939 / DSM 20539 / JCM 16871 / CCUG 27074 / LMG 4051 / NBRC 15346 / NCIMB 9279 / VKM B-1422 / R1)).